The primary structure comprises 1205 residues: Nitric oxide synthase 3 (1205 aa).

Positions Met1–Val73 are disordered. Gly2 carries N-myristoyl glycine lipidation. 2 S-palmitoyl cysteine lipidation sites follow: Cys15 and Cys26. Residues Cys15–Gly27 are compositionally biased toward gly residues. The span at Leu44–Pro54 shows a compositional bias: pro residues. Positions 96 and 101 each coordinate Zn(2+). The tract at residues Arg100–Lys488 is interaction with NOSIP. Ser104 provides a ligand contact to (6R)-L-erythro-5,6,7,8-tetrahydrobiopterin. Phosphoserine; by CDK5 is present on Ser116. Cys186 is a heme b binding site. The L-arginine site is built by Gln249, Trp358, Tyr359, Glu363, and Asn368. (6R)-L-erythro-5,6,7,8-tetrahydrobiopterin-binding residues include Ala448, Trp449, and Phe462. Tyr477 contributes to the heme b binding site. The calmodulin-binding stretch occupies residues Val492–Met512. Phosphothreonine; by AMPK is present on Thr497. In terms of domain architecture, Flavodoxin-like spans Ala522–Phe705. Residues Ser528, Glu529, Thr530, Arg532, Ser574, and Thr575 each coordinate FMN. 3 positions are modified to phosphoserine: Ser617, Ser635, and Ser640. Residues Ser656, Cys663, Glu689, and Gln693 each contribute to the FMN site. Residues Arg758 to Pro1004 form the FAD-binding FR-type domain. Arg778 contacts NADP(+). His800 contacts FAD. The disordered stretch occupies residues Val819–Pro850. Ser838 carries the post-translational modification Phosphoserine. Arg940, Tyr942, Ser943, Thr958, Ala960, Tyr964, Val977, Cys978, and Ser979 together coordinate FAD. Thr1018, Arg1051, Ser1080, Arg1081, Lys1087, Tyr1089, and Gln1091 together coordinate NADP(+). Thr1177 carries the post-translational modification Phosphothreonine. Phosphoserine; by AMPK is present on Ser1179. Phosphoserine is present on Ser1181.

Belongs to the NOS family. As to quaternary structure, homodimer. Interacts with NOSIP and NOSTRIN. Interacts with HSP90AB1. Forms a complex with ASL, ASS1 and SLC7A1; the complex regulates cell-autonomous L-arginine synthesis and citrulline recycling while channeling extracellular L-arginine to nitric oxide synthesis pathway. It depends on heme b as a cofactor. Requires FAD as cofactor. The cofactor is FMN. (6R)-L-erythro-5,6,7,8-tetrahydrobiopterin is required as a cofactor. In terms of processing, phosphorylation by AMPK at Ser-1179 in the presence of Ca(2+)-calmodulin (CaM) activates activity. In absence of Ca(2+)-calmodulin, AMPK also phosphorylates Thr-497, resulting in inhibition of activity. Phosphorylation of Ser-116 by CDK5 reduces activity.

The protein localises to the membrane. The protein resides in the caveola. It is found in the cytoplasm. Its subcellular location is the cytoskeleton. It localises to the golgi apparatus. The protein localises to the cell membrane. It catalyses the reaction 2 L-arginine + 3 NADPH + 4 O2 + H(+) = 2 L-citrulline + 2 nitric oxide + 3 NADP(+) + 4 H2O. Its activity is regulated as follows. Stimulated by calcium/calmodulin. Inhibited by NOSIP and NOSTRIN. Its function is as follows. Produces nitric oxide (NO) which is implicated in vascular smooth muscle relaxation through a cGMP-mediated signal transduction pathway. NO mediates vascular endothelial growth factor (VEGF)-induced angiogenesis in coronary vessels and promotes blood clotting through the activation of platelets. The protein is Nitric oxide synthase 3 (NOS3) of Canis lupus familiaris (Dog).